Consider the following 416-residue polypeptide: 3-isopropylmalate dehydratase large subunit 2 (416 aa).

Residues Cys-296, Cys-356, and Cys-359 each contribute to the [4Fe-4S] cluster site.

This sequence belongs to the aconitase/IPM isomerase family. LeuC type 2 subfamily. Heterodimer of LeuC and LeuD. [4Fe-4S] cluster is required as a cofactor.

It carries out the reaction (2R,3S)-3-isopropylmalate = (2S)-2-isopropylmalate. It functions in the pathway amino-acid biosynthesis; L-leucine biosynthesis; L-leucine from 3-methyl-2-oxobutanoate: step 2/4. Catalyzes the isomerization between 2-isopropylmalate and 3-isopropylmalate, via the formation of 2-isopropylmaleate. The sequence is that of 3-isopropylmalate dehydratase large subunit 2 from Archaeoglobus fulgidus (strain ATCC 49558 / DSM 4304 / JCM 9628 / NBRC 100126 / VC-16).